The sequence spans 292 residues: Phosphoribosylaminoimidazole-succinocarboxamide synthase (292 aa).

It belongs to the SAICAR synthetase family.

The enzyme catalyses 5-amino-1-(5-phospho-D-ribosyl)imidazole-4-carboxylate + L-aspartate + ATP = (2S)-2-[5-amino-1-(5-phospho-beta-D-ribosyl)imidazole-4-carboxamido]succinate + ADP + phosphate + 2 H(+). It participates in purine metabolism; IMP biosynthesis via de novo pathway; 5-amino-1-(5-phospho-D-ribosyl)imidazole-4-carboxamide from 5-amino-1-(5-phospho-D-ribosyl)imidazole-4-carboxylate: step 1/2. This chain is Phosphoribosylaminoimidazole-succinocarboxamide synthase, found in Elusimicrobium minutum (strain Pei191).